The chain runs to 172 residues: Large ribosomal subunit protein uL10 (172 aa).

It belongs to the universal ribosomal protein uL10 family. As to quaternary structure, part of the ribosomal stalk of the 50S ribosomal subunit. The N-terminus interacts with L11 and the large rRNA to form the base of the stalk. The C-terminus forms an elongated spine to which L12 dimers bind in a sequential fashion forming a multimeric L10(L12)X complex.

In terms of biological role, forms part of the ribosomal stalk, playing a central role in the interaction of the ribosome with GTP-bound translation factors. This is Large ribosomal subunit protein uL10 from Chlorobium limicola (strain DSM 245 / NBRC 103803 / 6330).